The following is a 160-amino-acid chain: 2-C-methyl-D-erythritol 2,4-cyclodiphosphate synthase (160 aa).

Residues aspartate 8 and histidine 10 each contribute to the a divalent metal cation site. 4-CDP-2-C-methyl-D-erythritol 2-phosphate is bound by residues 8–10 and 34–35; these read DVH and HS. Residue histidine 42 coordinates a divalent metal cation. 4-CDP-2-C-methyl-D-erythritol 2-phosphate contacts are provided by residues 56-58, 61-65, 100-106, 132-135, phenylalanine 139, and arginine 142; these read DIG, FPDTD, AQAPKML, and TTTE.

It belongs to the IspF family. As to quaternary structure, homotrimer. It depends on a divalent metal cation as a cofactor.

The enzyme catalyses 4-CDP-2-C-methyl-D-erythritol 2-phosphate = 2-C-methyl-D-erythritol 2,4-cyclic diphosphate + CMP. The protein operates within isoprenoid biosynthesis; isopentenyl diphosphate biosynthesis via DXP pathway; isopentenyl diphosphate from 1-deoxy-D-xylulose 5-phosphate: step 4/6. Functionally, involved in the biosynthesis of isopentenyl diphosphate (IPP) and dimethylallyl diphosphate (DMAPP), two major building blocks of isoprenoid compounds. Catalyzes the conversion of 4-diphosphocytidyl-2-C-methyl-D-erythritol 2-phosphate (CDP-ME2P) to 2-C-methyl-D-erythritol 2,4-cyclodiphosphate (ME-CPP) with a corresponding release of cytidine 5-monophosphate (CMP). The sequence is that of 2-C-methyl-D-erythritol 2,4-cyclodiphosphate synthase from Proteus mirabilis (strain HI4320).